A 262-amino-acid chain; its full sequence is tRNA pseudouridine synthase A (262 aa).

The Nucleophile role is filled by Asp51. Residue Tyr106 participates in substrate binding.

The protein belongs to the tRNA pseudouridine synthase TruA family.

It carries out the reaction uridine(38/39/40) in tRNA = pseudouridine(38/39/40) in tRNA. Functionally, formation of pseudouridine at positions 38, 39 and 40 in the anticodon stem and loop of transfer RNAs. The chain is tRNA pseudouridine synthase A from Pyrococcus horikoshii (strain ATCC 700860 / DSM 12428 / JCM 9974 / NBRC 100139 / OT-3).